A 129-amino-acid polypeptide reads, in one-letter code: Small ribosomal subunit protein uS11 (129 aa).

Belongs to the universal ribosomal protein uS11 family. As to quaternary structure, part of the 30S ribosomal subunit. Interacts with proteins S7 and S18. Binds to IF-3.

Functionally, located on the platform of the 30S subunit, it bridges several disparate RNA helices of the 16S rRNA. Forms part of the Shine-Dalgarno cleft in the 70S ribosome. The polypeptide is Small ribosomal subunit protein uS11 (Dinoroseobacter shibae (strain DSM 16493 / NCIMB 14021 / DFL 12)).